Here is a 76-residue protein sequence, read N- to C-terminus: Alpha-amylase inhibitor Z-2685 (76 aa).

2 disulfides stabilise this stretch: Cys9/Cys25 and Cys43/Cys70.

In terms of biological role, inhibits mammalian alpha-amylases specifically but has no action on plant and microbial alpha-amylases. In Streptomyces rochei (Streptomyces parvullus), this protein is Alpha-amylase inhibitor Z-2685.